The following is a 753-amino-acid chain: 5-methyltetrahydropteroyltriglutamate--homocysteine methyltransferase (753 aa).

5-methyltetrahydropteroyltri-L-glutamate-binding positions include 17-20 (RELK) and Lys117. Residues 431–433 (IGS) and Glu484 contribute to the L-homocysteine site. L-methionine-binding positions include 431–433 (IGS) and Glu484. Residues 515–516 (RC) and Trp561 contribute to the 5-methyltetrahydropteroyltri-L-glutamate site. Residue Asp599 participates in L-homocysteine binding. Asp599 lines the L-methionine pocket. Glu605 contacts 5-methyltetrahydropteroyltri-L-glutamate. Zn(2+) is bound by residues His641, Cys643, and Glu665. Catalysis depends on His694, which acts as the Proton donor. Position 726 (Cys726) interacts with Zn(2+).

Belongs to the vitamin-B12 independent methionine synthase family. It depends on Zn(2+) as a cofactor.

The catalysed reaction is 5-methyltetrahydropteroyltri-L-glutamate + L-homocysteine = tetrahydropteroyltri-L-glutamate + L-methionine. The protein operates within amino-acid biosynthesis; L-methionine biosynthesis via de novo pathway; L-methionine from L-homocysteine (MetE route): step 1/1. Its function is as follows. Catalyzes the transfer of a methyl group from 5-methyltetrahydrofolate to homocysteine resulting in methionine formation. This is 5-methyltetrahydropteroyltriglutamate--homocysteine methyltransferase from Shigella flexneri.